The primary structure comprises 135 residues: Immunity protein RhsIA (135 aa).

The tract at residues 58-77 is disordered; the sequence is RKQGRQISLSCGEPPEYSPD.

Immunity component of a toxin-immunity protein module, which functions as a cellular contact-dependent growth inhibition (CDI) system. Specifically inhibits its cognate toxin RhsA. Cell contact is necessary for growth inhibition. The protein is Immunity protein RhsIA (rhsIA) of Dickeya dadantii (strain 3937) (Erwinia chrysanthemi (strain 3937)).